We begin with the raw amino-acid sequence, 187 residues long: POM121 and ZP3 fusion protein (187 aa).

The segment at 166-187 (GTPSHSRRQPRVVSQWSTSASL) is disordered. Positions 177 to 187 (VVSQWSTSASL) are enriched in polar residues.

Expressed in spleen, thymus, pancreas, testis, ovary, small intestine, colon and lymphocytes.

The chain is POM121 and ZP3 fusion protein (POMZP3) from Homo sapiens (Human).